The primary structure comprises 428 residues: Type II methyltransferase M.BanI (428 aa).

An SAM-dependent MTase C5-type domain is found at Ile-3–Glu-417. Residue Cys-76 is part of the active site.

The protein belongs to the class I-like SAM-binding methyltransferase superfamily. C5-methyltransferase family. Monomer.

The catalysed reaction is a 2'-deoxycytidine in DNA + S-adenosyl-L-methionine = a 5-methyl-2'-deoxycytidine in DNA + S-adenosyl-L-homocysteine + H(+). A methylase, recognizes the double-stranded sequence 5'-GGYRCC-3', methylates C-4 on both strands, and protects the DNA from cleavage by the BanI endonuclease. The sequence is that of Type II methyltransferase M.BanI (banIM) from Aneurinibacillus aneurinilyticus (Bacillus aneurinolyticus).